A 270-amino-acid polypeptide reads, in one-letter code: UPF0354 protein Bcer98_3354 (270 aa).

It belongs to the UPF0354 family.

The sequence is that of UPF0354 protein Bcer98_3354 from Bacillus cytotoxicus (strain DSM 22905 / CIP 110041 / 391-98 / NVH 391-98).